The following is a 156-amino-acid chain: Small ribosomal subunit protein uS7 (156 aa).

The protein belongs to the universal ribosomal protein uS7 family. In terms of assembly, part of the 30S ribosomal subunit. Contacts proteins S9 and S11.

In terms of biological role, one of the primary rRNA binding proteins, it binds directly to 16S rRNA where it nucleates assembly of the head domain of the 30S subunit. Is located at the subunit interface close to the decoding center, probably blocks exit of the E-site tRNA. The sequence is that of Small ribosomal subunit protein uS7 from Methylobacterium radiotolerans (strain ATCC 27329 / DSM 1819 / JCM 2831 / NBRC 15690 / NCIMB 10815 / 0-1).